Reading from the N-terminus, the 185-residue chain is Peptidyl-tRNA hydrolase (185 aa).

Tyrosine 14 lines the tRNA pocket. The active-site Proton acceptor is histidine 19. The tRNA site is built by phenylalanine 64, asparagine 66, and asparagine 112.

This sequence belongs to the PTH family. As to quaternary structure, monomer.

The protein localises to the cytoplasm. The catalysed reaction is an N-acyl-L-alpha-aminoacyl-tRNA + H2O = an N-acyl-L-amino acid + a tRNA + H(+). Its function is as follows. Hydrolyzes ribosome-free peptidyl-tRNAs (with 1 or more amino acids incorporated), which drop off the ribosome during protein synthesis, or as a result of ribosome stalling. In terms of biological role, catalyzes the release of premature peptidyl moieties from peptidyl-tRNA molecules trapped in stalled 50S ribosomal subunits, and thus maintains levels of free tRNAs and 50S ribosomes. The chain is Peptidyl-tRNA hydrolase from Caldanaerobacter subterraneus subsp. tengcongensis (strain DSM 15242 / JCM 11007 / NBRC 100824 / MB4) (Thermoanaerobacter tengcongensis).